The chain runs to 430 residues: Enolase (430 aa).

Residue Gln-163 participates in (2R)-2-phosphoglycerate binding. Glu-205 (proton donor) is an active-site residue. Mg(2+) is bound by residues Asp-242, Glu-285, and Asp-312. 4 residues coordinate (2R)-2-phosphoglycerate: Lys-337, Arg-366, Ser-367, and Lys-388. The active-site Proton acceptor is the Lys-337.

Belongs to the enolase family. Requires Mg(2+) as cofactor.

It localises to the cytoplasm. It is found in the secreted. Its subcellular location is the cell surface. It catalyses the reaction (2R)-2-phosphoglycerate = phosphoenolpyruvate + H2O. It functions in the pathway carbohydrate degradation; glycolysis; pyruvate from D-glyceraldehyde 3-phosphate: step 4/5. Functionally, catalyzes the reversible conversion of 2-phosphoglycerate (2-PG) into phosphoenolpyruvate (PEP). It is essential for the degradation of carbohydrates via glycolysis. The chain is Enolase from Bifidobacterium animalis subsp. lactis (strain AD011).